The following is a 393-amino-acid chain: Acetate kinase (393 aa).

Asn-7 contacts Mg(2+). Position 14 (Lys-14) interacts with ATP. Arg-90 serves as a coordination point for substrate. Asp-147 (proton donor/acceptor) is an active-site residue. Residues 205–209, 280–282, and 328–332 each bind ATP; these read HLGNG, DFR, and GIGEN. Glu-380 is a Mg(2+) binding site.

The protein belongs to the acetokinase family. As to quaternary structure, homodimer. The cofactor is Mg(2+). It depends on Mn(2+) as a cofactor.

It is found in the cytoplasm. The catalysed reaction is acetate + ATP = acetyl phosphate + ADP. It participates in metabolic intermediate biosynthesis; acetyl-CoA biosynthesis; acetyl-CoA from acetate: step 1/2. In terms of biological role, catalyzes the formation of acetyl phosphate from acetate and ATP. Can also catalyze the reverse reaction. This chain is Acetate kinase, found in Finegoldia magna (strain ATCC 29328 / DSM 20472 / WAL 2508) (Peptostreptococcus magnus).